Consider the following 1009-residue polypeptide: UvrABC system protein A (1009 aa).

32–39 is a binding site for ATP; the sequence is GLSGSGKS. ABC transporter domains follow at residues 314-592 and 612-941; these read WSHG…AESQ and RDPS…KFLR. ATP is bound at residue 645-652; that stretch reads GVSGSGKS. The C4-type zinc-finger motif lies at 744-770; it reads CENCSGDGTIKIEMNFLPDVYVPCEVC. Positions 956–1009 are disordered; that stretch reads KAPRKTAARKTAAAKSTTKKTATVRTTNNTATKKAAAVTKKTAPAKKTTRARKA. The span at 964–997 shows a compositional bias: low complexity; the sequence is RKTAAAKSTTKKTATVRTTNNTATKKAAAVTKKT. A compositionally biased stretch (basic residues) spans 998–1009; that stretch reads APAKKTTRARKA.

It belongs to the ABC transporter superfamily. UvrA family. In terms of assembly, forms a heterotetramer with UvrB during the search for lesions.

It localises to the cytoplasm. Functionally, the UvrABC repair system catalyzes the recognition and processing of DNA lesions. UvrA is an ATPase and a DNA-binding protein. A damage recognition complex composed of 2 UvrA and 2 UvrB subunits scans DNA for abnormalities. When the presence of a lesion has been verified by UvrB, the UvrA molecules dissociate. In Streptomyces avermitilis (strain ATCC 31267 / DSM 46492 / JCM 5070 / NBRC 14893 / NCIMB 12804 / NRRL 8165 / MA-4680), this protein is UvrABC system protein A.